A 475-amino-acid polypeptide reads, in one-letter code: 3-isopropylmalate dehydratase large subunit (475 aa).

The [4Fe-4S] cluster site is built by C349, C409, and C412.

It belongs to the aconitase/IPM isomerase family. LeuC type 1 subfamily. In terms of assembly, heterodimer of LeuC and LeuD. It depends on [4Fe-4S] cluster as a cofactor.

It carries out the reaction (2R,3S)-3-isopropylmalate = (2S)-2-isopropylmalate. Its pathway is amino-acid biosynthesis; L-leucine biosynthesis; L-leucine from 3-methyl-2-oxobutanoate: step 2/4. Functionally, catalyzes the isomerization between 2-isopropylmalate and 3-isopropylmalate, via the formation of 2-isopropylmaleate. This Cereibacter sphaeroides (strain ATCC 17029 / ATH 2.4.9) (Rhodobacter sphaeroides) protein is 3-isopropylmalate dehydratase large subunit.